Here is a 313-residue protein sequence, read N- to C-terminus: Ribosomal RNA small subunit methyltransferase H (313 aa).

S-adenosyl-L-methionine contacts are provided by residues Gly-35–His-37, Asp-55, Phe-79, Asp-101, and Gln-108.

Belongs to the methyltransferase superfamily. RsmH family.

The protein resides in the cytoplasm. It carries out the reaction cytidine(1402) in 16S rRNA + S-adenosyl-L-methionine = N(4)-methylcytidine(1402) in 16S rRNA + S-adenosyl-L-homocysteine + H(+). Functionally, specifically methylates the N4 position of cytidine in position 1402 (C1402) of 16S rRNA. This chain is Ribosomal RNA small subunit methyltransferase H, found in Salmonella newport (strain SL254).